Reading from the N-terminus, the 1444-residue chain is MDLARSDIIPHLLCLFQEIIQANIQKVSEAYDLELKIMNILTLWRNGSDNLISDNDDYMKKGLFFSRSNDPLALQARYARMYDDLFKLNNYEVPDDVVRRHDNKILDIILKESSVPFWYDISDDEAHESMLPEFRLQDIHEFRLNLKRVRVVPDESEEIQMDESQSDKRRRKKRMEKSRPVWLSGSESDRRIELNDSLKPSQKFETKLSSYLLNRLMNEMNPHYCGHPLPALFVTLIMLKAYSIKNKFFSYGIRYMELVCNEIAGPDLNTRTFPVLFGSDGSFVGTRVYSHYPIKLRMILNDLTYLLTYSDLHKFQEFELDVNDEVLLHMLRTPNDGRQLKKAVTRLNHYYGLKFNPKTTDCGVVNGMDFTHKHPITKTADFTSPVLPMTNSFNKAEICYGHNSKILNRAVFTDTVRGHIREDLKNVADLDLPKLYEHVSKLVDMRVNYTIIYDLMFLRVMLNLGGYSRSNQITDFRKTIDEITKMNEGFLSGADPEKNIDTLNAWMAPTMEDCGYRLTKSILFGKFRKAKYPSDLEAKSNIDYYVTARSAGIGNLRISIETDKRKYKVRTTSKSAFVNAMGSGILDVNPVSNEPMMLTDYLLTQTPETRANLEAAIDSGSKSDSELMRILGQNSIGSRSTTAWRPVRPIYINVLQAHLAQAFIIGPHINATVNQHEYQPTSLWFTGDDLGVGFATLYQSGTADIIVPAIEASSTGKALSVLADCSSWDQTYLTATMIPYYNGIKRALLEYQQADMRNFYMIDSGRTGVPGMKLSEIVDWFNSFQTKRIFNASYLKERHSFVVKYMWSGRLDTFFMNSVQNALITRRIAEEVSLRVSNTGLSWFQVAGDDAIMVYDGSSISTTEQVTRINEITVRNYEESNHIINPQKTVISHISGEYAKIYYYAGMHFRDPSIQLHESEKDSGASDVTESLREFGQVIYEYNKRAIGTLRVNALYGRLIAGLAYSVNCPQYDASKRTYANMKYYPPPTSVIAPAAFKGGLGLSFTGLSLNEVLFIKLHLHEAVSQGLHVISMISFEANEVVSNSLSAYYLKDQKDLLRDMKLGKHLEKVKGISFKSSDLAFSGSDFSQGLNLKRESIDKVKLEVSRKSIRDLRSSGISVPSTHAYENLPYASLHQSFKSLKVDRDTSKFTNERLLVSLLEYKSDIPRVSVTSQYPVYDLINISKVDELNVRSGGPVRFISAPIEGKLLEENIGTRQGVQFKNRGYGGSQEVLHFIRSNGLVITEQALIDLIIKSGVLLMINPQRGLIDLFQSLSGDTASSMHLANFFMAEKPHWEDNAISLTIAGSLLENCDSRIENVKNFVSVLATGMQKDLQRMFYYVGFVYYAQRLIWSGGHSSKIFVSIDEDKLADFLRGSKPITRRRKAMAGTKREPINLSANFSYEISEPDREISEYDPLILCHPLSMPFFGNWQEKYSVMQSDEQM.

The interval 156–182 (SEEIQMDESQSDKRRRKKRMEKSRPVW) is disordered. One can recognise a RdRp catalytic domain in the interval 690 to 897 (LGVGFATLYQ…KTVISHISGE (208 aa)).

This sequence belongs to the reoviridae RNA-directed RNA polymerase family.

It is found in the virion. It localises to the host cytoplasm. The catalysed reaction is RNA(n) + a ribonucleoside 5'-triphosphate = RNA(n+1) + diphosphate. RNA-directed RNA polymerase that is involved in both transcription and genome replication. Together with the capping enzyme P5 and protein P7, forms an enzyme complex positioned near the channels situated at each of the five-fold vertices of the core. The sequence is that of RNA-directed RNA polymerase P1 (S1) from Rice dwarf virus (isolate Fujian) (RDV).